Reading from the N-terminus, the 325-residue chain is GTP 3',8-cyclase (325 aa).

The region spanning 4–219 is the Radical SAM core domain; sequence NYNRNINYLR…HGLQQKFGLL (216 aa). Residue Arg-13 coordinates GTP. Positions 20 and 24 each coordinate [4Fe-4S] cluster. Tyr-26 is an S-adenosyl-L-methionine binding site. Cys-27 provides a ligand contact to [4Fe-4S] cluster. Residue Arg-63 participates in GTP binding. Gly-67 serves as a coordination point for S-adenosyl-L-methionine. Residue Thr-94 coordinates GTP. Ser-118 contacts S-adenosyl-L-methionine. Lys-155 provides a ligand contact to GTP. Met-189 is a binding site for S-adenosyl-L-methionine. Positions 254 and 257 each coordinate [4Fe-4S] cluster. A GTP-binding site is contributed by 259–261; the sequence is RLR. Residue Cys-271 coordinates [4Fe-4S] cluster.

Belongs to the radical SAM superfamily. MoaA family. As to quaternary structure, monomer and homodimer. [4Fe-4S] cluster is required as a cofactor.

It catalyses the reaction GTP + AH2 + S-adenosyl-L-methionine = (8S)-3',8-cyclo-7,8-dihydroguanosine 5'-triphosphate + 5'-deoxyadenosine + L-methionine + A + H(+). The protein operates within cofactor biosynthesis; molybdopterin biosynthesis. Functionally, catalyzes the cyclization of GTP to (8S)-3',8-cyclo-7,8-dihydroguanosine 5'-triphosphate. The chain is GTP 3',8-cyclase from Desulforamulus reducens (strain ATCC BAA-1160 / DSM 100696 / MI-1) (Desulfotomaculum reducens).